A 336-amino-acid polypeptide reads, in one-letter code: Probable G-protein coupled receptor 160 (336 aa).

The Extracellular segment spans residues 1 to 20 (MTALSSKNCSLQYQLHQSPQ). N-linked (GlcNAc...) asparagine glycosylation occurs at Asn8. A helical membrane pass occupies residues 21-41 (LLEASCLLFLIILGKVLLNIL). Over 42–56 (LLRVRRGDARWTLME) the chain is Cytoplasmic. The helical transmembrane segment at 57–77 (YFCFSLALVDLLLLVNISILT) threads the bilayer. Topologically, residues 78 to 95 (YFRDFVVLGIRFTRYHIC) are extracellular. A helical membrane pass occupies residues 96–116 (LLTQIISFTYGFLHYPVCSLA). Residues 117-136 (CIDYWCNLSRASKQSSRWQK) are Cytoplasmic-facing. The chain crosses the membrane as a helical span at residues 137–157 (LLYFLTVILTWISVLAYVLVD). The Extracellular segment spans residues 158-186 (PAISVSLKAHRGYVYQCPAYVSTQSHWLS). Residues 187–207 (LSMLMVLFVAFLISWQEVVAL) traverse the membrane as a helical segment. Over 208-243 (LQAMRIASYKSKAALYFPFPLHCGYALSCREALLPR) the chain is Cytoplasmic. Residues 244–264 (LIVCFLGTWFPFVALQVLILS) form a helical membrane-spanning segment. Over 265-272 (LRVQIPAY) the chain is Extracellular. A helical transmembrane segment spans residues 273 to 293 (IEMNVPWLYFVNSFLIAAVYW). Residues 294 to 336 (FNCHKLDLRDSSLPVDPFINWKCCFVPVHRLKQVERPMSIVIC) are Cytoplasmic-facing.

It belongs to the G-protein coupled receptor 1 family.

Its subcellular location is the cell membrane. Its function is as follows. Orphan receptor. The polypeptide is Probable G-protein coupled receptor 160 (Gpr160) (Mus musculus (Mouse)).